We begin with the raw amino-acid sequence, 397 residues long: S-adenosylmethionine synthase (397 aa).

His-16 is a binding site for ATP. Asp-18 is a binding site for Mg(2+). Glu-44 contacts K(+). Residues Glu-57 and Gln-100 each coordinate L-methionine. Residues 100–110 (QSPDIAQGVNE) form a flexible loop region. Residues 175–177 (DAK), 242–243 (RF), Asp-251, 257–258 (RK), Ala-274, and Lys-278 each bind ATP. Residue Asp-251 coordinates L-methionine. Lys-282 is a binding site for L-methionine.

It belongs to the AdoMet synthase family. In terms of assembly, homotetramer; dimer of dimers. It depends on Mg(2+) as a cofactor. K(+) serves as cofactor.

The protein resides in the cytoplasm. It catalyses the reaction L-methionine + ATP + H2O = S-adenosyl-L-methionine + phosphate + diphosphate. It functions in the pathway amino-acid biosynthesis; S-adenosyl-L-methionine biosynthesis; S-adenosyl-L-methionine from L-methionine: step 1/1. Its function is as follows. Catalyzes the formation of S-adenosylmethionine (AdoMet) from methionine and ATP. The overall synthetic reaction is composed of two sequential steps, AdoMet formation and the subsequent tripolyphosphate hydrolysis which occurs prior to release of AdoMet from the enzyme. This is S-adenosylmethionine synthase from Streptococcus thermophilus (strain ATCC BAA-250 / LMG 18311).